The chain runs to 70 residues: DNA-directed RNA polymerase subunit omega (70 aa).

This sequence belongs to the RNA polymerase subunit omega family. As to quaternary structure, the RNAP catalytic core consists of 2 alpha, 1 beta, 1 beta' and 1 omega subunit. When a sigma factor is associated with the core the holoenzyme is formed, which can initiate transcription.

It carries out the reaction RNA(n) + a ribonucleoside 5'-triphosphate = RNA(n+1) + diphosphate. In terms of biological role, promotes RNA polymerase assembly. Latches the N- and C-terminal regions of the beta' subunit thereby facilitating its interaction with the beta and alpha subunits. This chain is DNA-directed RNA polymerase subunit omega, found in Marinobacter nauticus (strain ATCC 700491 / DSM 11845 / VT8) (Marinobacter aquaeolei).